Here is a 257-residue protein sequence, read N- to C-terminus: UPF0246 protein Rsph17025_0016 (257 aa).

The protein belongs to the UPF0246 family.

In Cereibacter sphaeroides (strain ATCC 17025 / ATH 2.4.3) (Rhodobacter sphaeroides), this protein is UPF0246 protein Rsph17025_0016.